Consider the following 599-residue polypeptide: DNA mismatch repair protein MutL (599 aa).

It belongs to the DNA mismatch repair MutL/HexB family.

In terms of biological role, this protein is involved in the repair of mismatches in DNA. It is required for dam-dependent methyl-directed DNA mismatch repair. May act as a 'molecular matchmaker', a protein that promotes the formation of a stable complex between two or more DNA-binding proteins in an ATP-dependent manner without itself being part of a final effector complex. The chain is DNA mismatch repair protein MutL from Rhodopseudomonas palustris (strain BisB18).